Consider the following 510-residue polypeptide: Inositol-3-phosphate synthase (510 aa).

Residues Gly-70, Gly-71, Asn-72, Asn-73, Asp-143, Ile-180, Gln-190, Arg-193, Thr-230, Ala-231, Asn-232, Thr-233, Gly-281, Ser-282, Asp-306, Ser-309, Asn-340, Asn-341, Asp-342, Lys-355, Gly-393, Asp-394, Asp-422, and Ser-423 each contribute to the NAD(+) site.

It belongs to the myo-inositol 1-phosphate synthase family. The cofactor is NAD(+).

The protein localises to the cytoplasm. It is found in the cytosol. Its subcellular location is the nucleus. It catalyses the reaction D-glucose 6-phosphate = 1D-myo-inositol 3-phosphate. It participates in polyol metabolism; myo-inositol biosynthesis; myo-inositol from D-glucose 6-phosphate: step 1/2. Its function is as follows. Key enzyme in myo-inositol biosynthesis pathway that catalyzes the conversion of glucose 6-phosphate to 1-myo-inositol 1-phosphate in a NAD-dependent manner. This chain is Inositol-3-phosphate synthase (INPS1), found in Nicotiana paniculata.